Reading from the N-terminus, the 548-residue chain is MAAKDVKFGNDARVKMLRGVNVLADAVKVTLGPKGRNVVLDKSFGAPTITKDGVSVAREIELEDKFENMGAQMVKEVASKANDAAGDGTTTATVLAQSIITEGLKAVAAGMNPMDLKRGIDKAVIAAVEELKKLSVPCSDSKAIAQVGTISANSDETVGKLIAEAMEKVGKEGVITVEEGTGLQDELDVVEGMQFDRGYLSPYFINKPETGSIELESPFILLADKKISNIREMLPVLEAVAKAGKPLLIIAEDVEGEALATLVVNTMRGIVKVAAVKAPGFGDRRKAMLQDIATLTGGTVISEEIGLELEKTTLEDLGTAKRIVINKDTTIIIDGNGEEPAIQGRVSQIRQQIEEATSDYDREKLQERVAKLAGGVAVIKVGAATEVEMKEKKARVEDALHATRAAVEEGVVAGGGVALIRAASKLSELRGVNEDQNVGIKVALRAMESPLRQIVLNCGEEPSVVANTVKAGEGNYGYNAATEEYGDMIAMGILDPTKVTRSALQYAASVAGLMITTECMVTDLPKGDAPDLGGAGGMGGMGGMGGMM.

ATP-binding positions include 30-33, Lys-51, 87-91, Gly-415, 479-481, and Asp-495; these read TLGP, DGTTT, and NAA.

The protein belongs to the chaperonin (HSP60) family. Forms a cylinder of 14 subunits composed of two heptameric rings stacked back-to-back. Interacts with the co-chaperonin GroES.

It localises to the cytoplasm. The catalysed reaction is ATP + H2O + a folded polypeptide = ADP + phosphate + an unfolded polypeptide.. Its function is as follows. Together with its co-chaperonin GroES, plays an essential role in assisting protein folding. The GroEL-GroES system forms a nano-cage that allows encapsulation of the non-native substrate proteins and provides a physical environment optimized to promote and accelerate protein folding. This is Chaperonin GroEL from Serratia proteamaculans (strain 568).